The chain runs to 303 residues: Uricase (303 aa).

Catalysis depends on charge relay system residues Lys12 and Thr60. Urate-binding residues include Thr60, Asp61, Phe162, Arg179, Val234, Gln235, and Asn261. His263 (charge relay system) is an active-site residue. Residues 301-303 carry the Microbody targeting signal motif; sequence TKL.

The protein belongs to the uricase family.

The protein localises to the peroxisome. It catalyses the reaction urate + O2 + H2O = 5-hydroxyisourate + H2O2. The protein operates within purine metabolism; urate degradation; (S)-allantoin from urate: step 1/3. Its function is as follows. Catalyzes the oxidation of uric acid to 5-hydroxyisourate, which is further processed to form (S)-allantoin. This is Uricase from Cyberlindnera jadinii (Torula yeast).